Here is a 466-residue protein sequence, read N- to C-terminus: 55 kDa erythrocyte membrane protein (466 aa).

An N-acetylthreonine modification is found at Thr2. Phosphoserine occurs at positions 13 and 19. Phosphothreonine is present on Thr49. 3 positions are modified to phosphoserine: Ser52, Ser57, and Ser110. Positions 71–152 constitute a PDZ domain; it reads LIQFEKVTEE…MISLKVIPNQ (82 aa). The region spanning 158-228 is the SH3 domain; the sequence is ALQMFMRAQF…PSPELQEWRV (71 aa). At Ser243 the chain carries Phosphoserine. Residues 268-466 are interaction with PALS1; sequence VVSYEEVVRL…PQWVPVSWVY (199 aa). The Guanylate kinase-like domain maps to 282 to 451; it reads RKTLVLIGAS…TLKKLQEAFD (170 aa).

It belongs to the MAGUK family. As to quaternary structure, heterodimer with PALS1. Interacts with DLG5 and NF2. Interacts (via guanylate kinase-like domain) with WHRN (via third PDZ domain). In terms of processing, palmitoylated.

It is found in the cell membrane. Its subcellular location is the cell projection. The protein localises to the stereocilium. In terms of biological role, essential regulator of neutrophil polarity. Regulates neutrophil polarization by regulating AKT1 phosphorylation through a mechanism that is independent of PIK3CG activity. The polypeptide is 55 kDa erythrocyte membrane protein (MPP1) (Pongo abelii (Sumatran orangutan)).